Consider the following 213-residue polypeptide: PRA1 family protein B2 (213 aa).

The disordered stretch occupies residues Met-1–Pro-21. Transmembrane regions (helical) follow at residues Leu-75–Leu-94, Pro-98–Phe-117, Leu-137–Leu-157, Leu-161–Phe-181, and Ala-190–Ala-210.

Belongs to the PRA1 family. In terms of assembly, interacts with PRA1B1, PRA1B3, PRA1B4, PRA1B5, PRA1B6 and PRA1E.

It localises to the endosome membrane. In terms of biological role, may be involved in both secretory and endocytic intracellular trafficking in the endosomal/prevacuolar compartments. The protein is PRA1 family protein B2 (PRA1B2) of Arabidopsis thaliana (Mouse-ear cress).